Here is a 176-residue protein sequence, read N- to C-terminus: Inner membrane-spanning protein YciB (176 aa).

5 helical membrane-spanning segments follow: residues 24–44, 49–69, 76–96, 119–139, and 149–169; these read TATA…AFRH, PMLW…LVLH, WKPT…QLAF, LNVV…FVAY, and FKLF…SLWL.

It belongs to the YciB family.

It localises to the cell inner membrane. Functionally, plays a role in cell envelope biogenesis, maintenance of cell envelope integrity and membrane homeostasis. This Paraburkholderia xenovorans (strain LB400) protein is Inner membrane-spanning protein YciB.